The sequence spans 564 residues: CTP synthase (564 aa).

Residues Met1–Ile265 are amidoligase domain. Position 13 (Ser13) interacts with CTP. Ser13 contributes to the UTP binding site. Residues Ser14–Ile19 and Asp71 contribute to the ATP site. Mg(2+) contacts are provided by Asp71 and Glu139. CTP-binding positions include Asp146–Glu148, Lys186–Gln191, and Lys222. UTP is bound by residues Lys186–Gln191 and Lys222. One can recognise a Glutamine amidotransferase type-1 domain in the interval Ser290–Lys543. Gly351 serves as a coordination point for L-glutamine. The active-site Nucleophile; for glutamine hydrolysis is Cys378. L-glutamine is bound by residues Leu379–Gln382, Glu402, and Arg469. Active-site residues include His516 and Glu518.

Belongs to the CTP synthase family. In terms of assembly, homotetramer.

The enzyme catalyses UTP + L-glutamine + ATP + H2O = CTP + L-glutamate + ADP + phosphate + 2 H(+). It carries out the reaction L-glutamine + H2O = L-glutamate + NH4(+). The catalysed reaction is UTP + NH4(+) + ATP = CTP + ADP + phosphate + 2 H(+). The protein operates within pyrimidine metabolism; CTP biosynthesis via de novo pathway; CTP from UDP: step 2/2. With respect to regulation, allosterically activated by GTP, when glutamine is the substrate; GTP has no effect on the reaction when ammonia is the substrate. The allosteric effector GTP functions by stabilizing the protein conformation that binds the tetrahedral intermediate(s) formed during glutamine hydrolysis. Inhibited by the product CTP, via allosteric rather than competitive inhibition. Catalyzes the ATP-dependent amination of UTP to CTP with either L-glutamine or ammonia as the source of nitrogen. Regulates intracellular CTP levels through interactions with the four ribonucleotide triphosphates. The chain is CTP synthase from Nitrosomonas eutropha (strain DSM 101675 / C91 / Nm57).